The following is a 328-amino-acid chain: 3-dehydroquinate synthase (328 aa).

The protein belongs to the archaeal-type DHQ synthase family.

It catalyses the reaction 2-amino-2,3,7-trideoxy-D-lyxo-hept-6-ulosonate + NAD(+) + H2O = 3-dehydroquinate + NH4(+) + NADH + H(+). In terms of biological role, catalyzes the oxidative deamination and cyclization of 2-amino-3,7-dideoxy-D-threo-hept-6-ulosonic acid (ADH) to yield 3-dehydroquinate (DHQ), which is fed into the canonical shikimic pathway of aromatic amino acid biosynthesis. This chain is 3-dehydroquinate synthase, found in Methanospirillum hungatei JF-1 (strain ATCC 27890 / DSM 864 / NBRC 100397 / JF-1).